Consider the following 216-residue polypeptide: Elongation factor Ts (216 aa).

Residues 81–84 form an involved in Mg(2+) ion dislocation from EF-Tu region; it reads TDFV.

The protein belongs to the EF-Ts family.

It localises to the cytoplasm. In terms of biological role, associates with the EF-Tu.GDP complex and induces the exchange of GDP to GTP. It remains bound to the aminoacyl-tRNA.EF-Tu.GTP complex up to the GTP hydrolysis stage on the ribosome. The polypeptide is Elongation factor Ts (Geotalea uraniireducens (strain Rf4) (Geobacter uraniireducens)).